Reading from the N-terminus, the 178-residue chain is uncharacterized protein (178 aa).

The N-terminal stretch at Met1–Ser19 is a signal peptide. Active-site residues include Arg52, Glu60, and Arg94.

Belongs to the thermonuclease family.

This is an uncharacterized protein from Haemophilus influenzae (strain ATCC 51907 / DSM 11121 / KW20 / Rd).